The following is a 314-amino-acid chain: Mitochondrial MRF1 N(5)-glutamine methyltransferase MTQ1 (314 aa).

Residues 118–122 (FTGTG), Asp-141, and Asn-188 contribute to the S-adenosyl-L-methionine site. 188–191 (NPPY) provides a ligand contact to substrate.

Belongs to the protein N5-glutamine methyltransferase family.

It localises to the mitochondrion. The catalysed reaction is L-glutaminyl-[peptide chain release factor] + S-adenosyl-L-methionine = N(5)-methyl-L-glutaminyl-[peptide chain release factor] + S-adenosyl-L-homocysteine + H(+). Its function is as follows. Methylates MRF1 on 'Gln-287' using S-adenosyl L-methionine as methyl donor. The chain is Mitochondrial MRF1 N(5)-glutamine methyltransferase MTQ1 (MTQ1) from Saccharomyces cerevisiae (strain ATCC 204508 / S288c) (Baker's yeast).